A 7603-amino-acid polypeptide reads, in one-letter code: Cysteine repeat modular protein B (7603 aa).

Asn-172 carries an N-linked (GlcNAc...) asparagine glycan. The chain crosses the membrane as a helical span at residues 223-243 (LVGFFLVPVFVVFFVLSSDAT). Disordered stretches follow at residues 248–275 (GVGV…SSPG) and 291–323 (RDTK…GKGF). Over residues 263–275 (SVSSSSRASSSPG) the composition is skewed to low complexity. Positions 302-313 (SSRRSARARRRR) are enriched in basic residues. N-linked (GlcNAc...) asparagine glycosylation is found at Asn-329, Asn-589, Asn-848, Asn-1128, Asn-1183, and Asn-1402. The disordered stretch occupies residues 1554 to 1574 (VLRSRSGPSHPSSVSQPSPSF). Residues 1557-1573 (SRSGPSHPSSVSQPSPS) show a composition bias toward low complexity. Asn-1622, Asn-2578, Asn-2664, Asn-3094, and Asn-3126 each carry an N-linked (GlcNAc...) asparagine glycan. A disordered region spans residues 3316 to 3445 (SNAVPEADEN…SDLTTSQPED (130 aa)). Over residues 3321–3340 (EADENQVESAEPEQNAEGET) the composition is skewed to acidic residues. The segment covering 3342–3360 (EQGAEEAGGNAAEPGAESG) has biased composition (low complexity). N-linked (GlcNAc...) asparagine glycosylation is found at Asn-3546, Asn-4367, Asn-4823, Asn-4901, Asn-5186, Asn-5546, and Asn-5666. Residues 5758–5799 (LAESRSDDGTVGDDVDLDDNALSGTTNSGWTTSSSNSERVRK) are disordered. Residues 5767–5776 (TVGDDVDLDD) are compositionally biased toward acidic residues. Residues 5780-5794 (SGTTNSGWTTSSSNS) show a composition bias toward low complexity. Asn-5806, Asn-5876, Asn-5998, Asn-6055, and Asn-6369 each carry an N-linked (GlcNAc...) asparagine glycan. Positions 6043 to 6115 (GEADHTPADG…EASEAESVSA (73 aa)) are disordered. The segment covering 6051 to 6060 (DGSSNSSEDS) has biased composition (polar residues). Positions 6391–6405 (EFTDTGPAPDDHTDE) are enriched in basic and acidic residues. The segment at 6391–6436 (EFTDTGPAPDDHTDEGGANLDSTGGSGEPSSSAPVDPSGENEGQLL) is disordered. Residues 6410 to 6423 (LDSTGGSGEPSSSA) are compositionally biased toward polar residues. Asn-6453 is a glycosylation site (N-linked (GlcNAc...) asparagine). The next 8 helical transmembrane spans lie at 6520 to 6540 (IFIL…ALTI), 6552 to 6572 (VLIR…LMPA), 6578 to 6598 (LAGW…ALHP), 6627 to 6647 (IFVP…CVAT), 6770 to 6790 (LILG…GFVA), 6831 to 6851 (CVAL…QEIF), 6888 to 6908 (GLMV…FEVF), and 6912 to 6932 (GAIP…SLFV). N-linked (GlcNAc...) asparagine glycosylation occurs at Asn-7013. Residues 7017-7037 (FVAALSDSLSQLVIAWCQFTI) traverse the membrane as a helical segment. A glycan (N-linked (GlcNAc...) asparagine) is linked at Asn-7061. A coiled-coil region spans residues 7174–7242 (APQLRKENHA…RGLIESEIDD (69 aa)). The interval 7379 to 7603 (AAPAAGLRSH…LKKPGSPKQE (225 aa)) is disordered. The span at 7408–7417 (LGTNLSTPSA) shows a compositional bias: polar residues. Asn-7411 is a glycosylation site (N-linked (GlcNAc...) asparagine). 3 stretches are compositionally biased toward low complexity: residues 7474 to 7496 (PTPS…SVTP), 7509 to 7541 (SEAP…SSDL), and 7560 to 7582 (GEAA…AAQP).

Component of a complex, at least composed of cysteine repeat modular protein A (CRMPa), cysteine repeat modular protein B (CRMPb), micronemal protein 15 (MIC15) and thrombospondin type 1 domain-containing protein (TSP1).

Its subcellular location is the cell membrane. The protein localises to the endoplasmic reticulum. It is found in the golgi apparatus. Functionally, required for triggering rhoptry secretion. Plays a role in host cell invasion. In Toxoplasma gondii, this protein is Cysteine repeat modular protein B.